Here is a 248-residue protein sequence, read N- to C-terminus: Probable transcriptional regulatory protein Mnod_7401 (248 aa).

The protein belongs to the TACO1 family.

Its subcellular location is the cytoplasm. In Methylobacterium nodulans (strain LMG 21967 / CNCM I-2342 / ORS 2060), this protein is Probable transcriptional regulatory protein Mnod_7401.